Reading from the N-terminus, the 720-residue chain is Polyribonucleotide nucleotidyltransferase (720 aa).

Aspartate 486 and aspartate 492 together coordinate Mg(2+). In terms of domain architecture, KH spans 553–612 (PRITVINVPKEKIREVIGTGGKVIREIVEFSGAKIDIEDDGTIKIASTSEESTQKAIDRI). The region spanning 622-690 (GKIYNGKVVK…DRGKVKLSMR (69 aa)) is the S1 motif domain. The disordered stretch occupies residues 698-720 (EDISDKVGPKGGRGGRGEGDLAE).

Belongs to the polyribonucleotide nucleotidyltransferase family. Mg(2+) is required as a cofactor.

It is found in the cytoplasm. It catalyses the reaction RNA(n+1) + phosphate = RNA(n) + a ribonucleoside 5'-diphosphate. Its function is as follows. Involved in mRNA degradation. Catalyzes the phosphorolysis of single-stranded polyribonucleotides processively in the 3'- to 5'-direction. This chain is Polyribonucleotide nucleotidyltransferase, found in Granulibacter bethesdensis (strain ATCC BAA-1260 / CGDNIH1).